Reading from the N-terminus, the 211-residue chain is MIISRRQIRELAMQVLYAYEVRKEKVDKVAKGIIPEDVVADIKAKDFIFKIINSVIQNIQDIDTHIAKHADNWELNRMAIIDKNLMRIAIAEMLYLDDVPPKVSINEAIEIAKRYSTDKSSKFVNGILDATYNEVKSKGVLHKSGRGLVDLPAKKERVANPFPSTPPKKPENVPNPFSTPFKKNSSEPIRNPFEGNKSPQPPQKTLRRKKK.

Residues 152-211 (PAKKERVANPFPSTPPKKPENVPNPFSTPFKKNSSEPIRNPFEGNKSPQPPQKTLRRKKK) are disordered. Positions 175–188 (NPFSTPFKKNSSEP) are enriched in polar residues.

Belongs to the NusB family.

Functionally, involved in transcription antitermination. Required for transcription of ribosomal RNA (rRNA) genes. Binds specifically to the boxA antiterminator sequence of the ribosomal RNA (rrn) operons. This Chloroherpeton thalassium (strain ATCC 35110 / GB-78) protein is Transcription antitermination protein NusB.